The following is a 264-amino-acid chain: Putative hydro-lyase Bpet2233 (264 aa).

The protein belongs to the D-glutamate cyclase family.

This is Putative hydro-lyase Bpet2233 from Bordetella petrii (strain ATCC BAA-461 / DSM 12804 / CCUG 43448).